The chain runs to 45 residues: Iota-conotoxin-like R11.12 (45 aa).

Disulfide bonds link C5–C19, C12–C22, C18–C27, and C21–C36. L43 bears the D-leucine mark. R45 is a propeptide (removed by a carboxypeptidase).

This sequence belongs to the conotoxin I1 superfamily. As to expression, expressed by the venom duct.

The protein resides in the secreted. In terms of biological role, iota-conotoxins bind to voltage-gated sodium channels (Nav) and act as agonists by shifting the voltage-dependence of activation to more hyperpolarized levels. Produces general excitatory symptoms. The protein is Iota-conotoxin-like R11.12 of Conus radiatus (Rayed cone).